Reading from the N-terminus, the 238-residue chain is Survival of motor neuron-related-splicing factor 30 (238 aa).

Residues 72-132 (SWKVGDKCMA…KPVEEGRKAK (61 aa)) form the Tudor domain. The Nuclear localization signal signature appears at 142–160 (KKEMIAQQREYKKKKALKK). Ser201 bears the Phosphoserine mark. Residue Lys219 is modified to N6-acetyllysine.

The protein belongs to the SMN family. Associates with spliceosomes. Associates with U4/U5/U6 tri-snRNP and with U2 snRNP.

Its subcellular location is the nucleus speckle. It is found in the nucleus. The protein localises to the cajal body. Its function is as follows. Involved in spliceosome assembly. The polypeptide is Survival of motor neuron-related-splicing factor 30 (SMNDC1) (Bos taurus (Bovine)).